Here is a 104-residue protein sequence, read N- to C-terminus: UPF0145 protein VNG_2432C (104 aa).

Belongs to the UPF0145 family.

This chain is UPF0145 protein VNG_2432C, found in Halobacterium salinarum (strain ATCC 700922 / JCM 11081 / NRC-1) (Halobacterium halobium).